A 109-amino-acid chain; its full sequence is UPF0122 protein CLH_1195 (109 aa).

It belongs to the UPF0122 family.

Its function is as follows. Might take part in the signal recognition particle (SRP) pathway. This is inferred from the conservation of its genetic proximity to ftsY/ffh. May be a regulatory protein. This chain is UPF0122 protein CLH_1195, found in Clostridium botulinum (strain Alaska E43 / Type E3).